An 87-amino-acid chain; its full sequence is U3-theraphotoxin-Hhn1a 6 (87 aa).

Residues 1–24 (MVNMKASMFLTFAGLVLLFVVCYA) form the signal peptide. The propeptide occupies 25-52 (SESEKKEFPKEMLSSIFAVDNDFKQEER). 3 disulfide bridges follow: C54-C67, C61-C72, and C66-C79.

The protein belongs to the neurotoxin 10 (Hwtx-1) family. 51 (Hntx-8) subfamily. Hntx-8 sub-subfamily. As to expression, expressed by the venom gland.

It is found in the secreted. Ion channel inhibitor. The sequence is that of U3-theraphotoxin-Hhn1a 6 from Cyriopagopus hainanus (Chinese bird spider).